Here is a 362-residue protein sequence, read N- to C-terminus: Peptide chain release factor 1 (362 aa).

Residue Gln-240 is modified to N5-methylglutamine.

It belongs to the prokaryotic/mitochondrial release factor family. Post-translationally, methylated by PrmC. Methylation increases the termination efficiency of RF1.

The protein resides in the cytoplasm. Its function is as follows. Peptide chain release factor 1 directs the termination of translation in response to the peptide chain termination codons UAG and UAA. The chain is Peptide chain release factor 1 from Bifidobacterium adolescentis (strain ATCC 15703 / DSM 20083 / NCTC 11814 / E194a).